Consider the following 312-residue polypeptide: DNA-directed RNA polymerase subunit alpha (312 aa).

The interval 1–226 (MIEFEKPNIT…EHFKVFMSTD (226 aa)) is alpha N-terminal domain (alpha-NTD). The segment at 243 to 312 (NEKKLEMTIE…ELGLSLRQDD (70 aa)) is alpha C-terminal domain (alpha-CTD).

It belongs to the RNA polymerase alpha chain family. As to quaternary structure, homodimer. The RNAP catalytic core consists of 2 alpha, 1 beta, 1 beta' and 1 omega subunit. When a sigma factor is associated with the core the holoenzyme is formed, which can initiate transcription.

It catalyses the reaction RNA(n) + a ribonucleoside 5'-triphosphate = RNA(n+1) + diphosphate. DNA-dependent RNA polymerase catalyzes the transcription of DNA into RNA using the four ribonucleoside triphosphates as substrates. In Lactobacillus gasseri (strain ATCC 33323 / DSM 20243 / BCRC 14619 / CIP 102991 / JCM 1131 / KCTC 3163 / NCIMB 11718 / NCTC 13722 / AM63), this protein is DNA-directed RNA polymerase subunit alpha.